The chain runs to 235 residues: Probable transcriptional regulatory protein MPN_478 (235 aa).

Belongs to the TACO1 family.

The protein resides in the cytoplasm. This chain is Probable transcriptional regulatory protein MPN_478, found in Mycoplasma pneumoniae (strain ATCC 29342 / M129 / Subtype 1) (Mycoplasmoides pneumoniae).